Consider the following 561-residue polypeptide: Dihydroxy-acid dehydratase (561 aa).

Cys50 serves as a coordination point for [2Fe-2S] cluster. Asp82 provides a ligand contact to Mg(2+). Cys123 serves as a coordination point for [2Fe-2S] cluster. Positions 124 and 125 each coordinate Mg(2+). Lys125 carries the N6-carboxylysine modification. Residue Cys195 coordinates [2Fe-2S] cluster. Glu447 provides a ligand contact to Mg(2+). Residue Ser473 is the Proton acceptor of the active site.

It belongs to the IlvD/Edd family. As to quaternary structure, homodimer. It depends on [2Fe-2S] cluster as a cofactor. Requires Mg(2+) as cofactor.

It carries out the reaction (2R)-2,3-dihydroxy-3-methylbutanoate = 3-methyl-2-oxobutanoate + H2O. It catalyses the reaction (2R,3R)-2,3-dihydroxy-3-methylpentanoate = (S)-3-methyl-2-oxopentanoate + H2O. The protein operates within amino-acid biosynthesis; L-isoleucine biosynthesis; L-isoleucine from 2-oxobutanoate: step 3/4. It functions in the pathway amino-acid biosynthesis; L-valine biosynthesis; L-valine from pyruvate: step 3/4. Functionally, functions in the biosynthesis of branched-chain amino acids. Catalyzes the dehydration of (2R,3R)-2,3-dihydroxy-3-methylpentanoate (2,3-dihydroxy-3-methylvalerate) into 2-oxo-3-methylpentanoate (2-oxo-3-methylvalerate) and of (2R)-2,3-dihydroxy-3-methylbutanoate (2,3-dihydroxyisovalerate) into 2-oxo-3-methylbutanoate (2-oxoisovalerate), the penultimate precursor to L-isoleucine and L-valine, respectively. The sequence is that of Dihydroxy-acid dehydratase from Chloroflexus aurantiacus (strain ATCC 29366 / DSM 635 / J-10-fl).